The primary structure comprises 114 residues: FK506-binding protein 1 (114 aa).

One can recognise a PPIase FKBP-type domain in the interval 26–114 (GDLVTIHYTG…VFDVELLKIN (89 aa)).

It belongs to the FKBP-type PPIase family. FKBP1 subfamily.

It is found in the cytoplasm. The enzyme catalyses [protein]-peptidylproline (omega=180) = [protein]-peptidylproline (omega=0). Its activity is regulated as follows. Inhibited by both FK506 and rapamycin. Its function is as follows. PPIases accelerate the folding of proteins. It catalyzes the cis-trans isomerization of proline imidic peptide bonds in oligopeptides. The protein is FK506-binding protein 1 (FPR1) of Kluyveromyces lactis (strain ATCC 8585 / CBS 2359 / DSM 70799 / NBRC 1267 / NRRL Y-1140 / WM37) (Yeast).